The sequence spans 109 residues: ATP-dependent Clp protease adapter protein ClpS (109 aa).

This sequence belongs to the ClpS family. Binds to the N-terminal domain of the chaperone ClpA.

In terms of biological role, involved in the modulation of the specificity of the ClpAP-mediated ATP-dependent protein degradation. The sequence is that of ATP-dependent Clp protease adapter protein ClpS from Lawsonia intracellularis (strain PHE/MN1-00).